Consider the following 39-residue polypeptide: Anthranilate phosphoribosyltransferase (39 aa).

It belongs to the anthranilate phosphoribosyltransferase family. As to quaternary structure, homodimer.

It carries out the reaction N-(5-phospho-beta-D-ribosyl)anthranilate + diphosphate = 5-phospho-alpha-D-ribose 1-diphosphate + anthranilate. It participates in amino-acid biosynthesis; L-tryptophan biosynthesis; L-tryptophan from chorismate: step 2/5. Catalyzes the transfer of the phosphoribosyl group of 5-phosphorylribose-1-pyrophosphate (PRPP) to anthranilate to yield N-(5'-phosphoribosyl)-anthranilate (PRA). This Pectobacterium carotovorum (Erwinia carotovora) protein is Anthranilate phosphoribosyltransferase (trpD).